The chain runs to 124 residues: MATINQLVRKPRQATTYKSASPALDKCPQRRGVCTRVYTTTPKKPNSALRKVAKVRLTNQEEVISYIGGEGHNLQEHSVVLIRGGRVKDLPGVRYHTVRGSLDAAGVAKRRQARSKYGAKRPKA.

The tract at residues Met1–Asp25 is disordered. A 3-methylthioaspartic acid modification is found at Asp89.

Belongs to the universal ribosomal protein uS12 family. Part of the 30S ribosomal subunit. Contacts proteins S8 and S17. May interact with IF1 in the 30S initiation complex.

Functionally, with S4 and S5 plays an important role in translational accuracy. Its function is as follows. Interacts with and stabilizes bases of the 16S rRNA that are involved in tRNA selection in the A site and with the mRNA backbone. Located at the interface of the 30S and 50S subunits, it traverses the body of the 30S subunit contacting proteins on the other side and probably holding the rRNA structure together. The combined cluster of proteins S8, S12 and S17 appears to hold together the shoulder and platform of the 30S subunit. The sequence is that of Small ribosomal subunit protein uS12 from Stenotrophomonas maltophilia (strain R551-3).